We begin with the raw amino-acid sequence, 134 residues long: Fluoride-specific ion channel FluC 2 (134 aa).

4 consecutive transmembrane segments (helical) span residues 1–21 (MNYF…EITG), 28–48 (IFPV…LFFM), 68–88 (GFLG…LLLF), and 92–112 (LLIG…SGIL). Na(+) is bound by residues G71 and T74.

This sequence belongs to the fluoride channel Fluc/FEX (TC 1.A.43) family.

The protein localises to the cell membrane. The enzyme catalyses fluoride(in) = fluoride(out). Na(+) is not transported, but it plays an essential structural role and its presence is essential for fluoride channel function. Fluoride-specific ion channel. Important for reducing fluoride concentration in the cell, thus reducing its toxicity. In Carboxydothermus hydrogenoformans (strain ATCC BAA-161 / DSM 6008 / Z-2901), this protein is Fluoride-specific ion channel FluC 2.